We begin with the raw amino-acid sequence, 762 residues long: cGMP-dependent protein kinase 2 (762 aa).

The tract at residues 1–25 (MGNGSVKPKHSKHPDGQSGNLSNEA) is disordered. Glycine 2 is lipidated: N-myristoyl glycine. Phosphoserine is present on residues serine 110 and serine 117. Positions 112–138 (LVSLHSRRGAKAGVSAEPTSRTYDLNK) are disordered. The cGMP-binding, high affinity; cAMP-binding, moderate affinity stretch occupies residues 168–283 (FLKRLDPQQI…DEEYRNFLRS (116 aa)). 3',5'-cyclic GMP contacts are provided by residues 232 to 235 (GELA), 242 to 243 (RT), lysine 347, 356 to 359 (GEKA), 366 to 367 (RS), aspartate 412, and arginine 415. The interval 286–416 (LLKNLPEDKL…TLNRDDEKRH (131 aa)) is cGMP-binding, high affinity; cAMP-binding, low affinity. The residue at position 431 (serine 431) is a Phosphoserine. Residues 453–711 (LEIIATLGVG…INDIKKHRWL (259 aa)) form the Protein kinase domain. Residues 459–467 (LGVGGFGRV) and lysine 482 each bind ATP. Residue aspartate 576 is the Proton acceptor of the active site. Residue threonine 609 is modified to Phosphothreonine. The AGC-kinase C-terminal domain occupies 712-762 (NGFNWEGLKARSLPSPLRRELSGPIDHSYFDKYPPEKGVPPDEMSGWDKDF). The segment at 740 to 762 (YFDKYPPEKGVPPDEMSGWDKDF) is disordered.

Belongs to the protein kinase superfamily. AGC Ser/Thr protein kinase family. cGMP subfamily. As to quaternary structure, interacts with GRIA1/GLUR1. Post-translationally, myristoylation mediates membrane localization. Highly expressed in intestinal mucosa and is 20 times less abundant in brain and kidney. Expressed in jejunum, in the apical domain of the villus epithelium.

The protein resides in the apical cell membrane. It localises to the cell membrane. It carries out the reaction L-seryl-[protein] + ATP = O-phospho-L-seryl-[protein] + ADP + H(+). The catalysed reaction is L-threonyl-[protein] + ATP = O-phospho-L-threonyl-[protein] + ADP + H(+). With respect to regulation, binding of cGMP results in enzyme activation. Functionally, crucial regulator of intestinal secretion and bone growth. Phosphorylates and activates CFTR on the plasma membrane. Plays a key role in intestinal secretion by regulating cGMP-dependent translocation of CFTR in jejunum. Acts downstream of NMDAR to activate the plasma membrane accumulation of GRIA1/GLUR1 in synapse and increase synaptic plasticity. Phosphorylates GRIA1/GLUR1 at Ser-863. Acts as regulator of gene expression and activator of the extracellular signal-regulated kinases MAPK3/ERK1 and MAPK1/ERK2 in mechanically stimulated osteoblasts. Under fluid shear stress, mediates ERK activation and subsequent induction of FOS, FOSL1/FRA1, FOSL2/FRA2 and FOSB that play a key role in the osteoblast anabolic response to mechanical stimulation. This chain is cGMP-dependent protein kinase 2 (Prkg2), found in Rattus norvegicus (Rat).